The chain runs to 156 residues: MASYFDEHNCEPTVPEEQYRQNALLELARSLLSGMDIDLGALDFTEWDQRLPPPAAKKVVESLPKVTVTPEQADAALKCPVCLLEFEEGETVRQLPCEHLFHSSCILPWLGKTNSCPLCRHELPTDSPEYEEYKQEKERRQQKEHRLECLHDAMYT.

An RING-type; atypical zinc finger spans residues 79–120 (CPVCLLEFEEGETVRQLPCEHLFHSSCILPWLGKTNSCPLCR).

This sequence belongs to the RNF181 family.

It carries out the reaction S-ubiquitinyl-[E2 ubiquitin-conjugating enzyme]-L-cysteine + [acceptor protein]-L-lysine = [E2 ubiquitin-conjugating enzyme]-L-cysteine + N(6)-ubiquitinyl-[acceptor protein]-L-lysine.. Its pathway is protein modification; protein ubiquitination. E3 ubiquitin-protein ligase which accepts ubiquitin from an E2 ubiquitin-conjugating enzyme in the form of a thioester and then directly transfers the ubiquitin to targeted substrates. Catalyzes monoubiquitination of 26S proteasome subunit PSMC2/RPT1. The chain is E3 ubiquitin-protein ligase RNF181 (rnf181) from Xenopus tropicalis (Western clawed frog).